The following is a 433-amino-acid chain: sn-glycerol-3-phosphate-binding periplasmic protein UgpB (433 aa).

Residues methionine 1–alanine 25 form the signal peptide. Residues tyrosine 67, aspartate 91, serine 146, serine 273, glycine 307, tyrosine 346, and arginine 397 each contribute to the sn-glycerol 3-phosphate site.

The protein belongs to the bacterial solute-binding protein 1 family. In terms of assembly, the complex is composed of two ATP-binding proteins (UgpC), two transmembrane proteins (UgpA and UgpE) and a solute-binding protein (UgpB).

Its subcellular location is the periplasm. Functionally, part of the ABC transporter complex UgpBAEC involved in sn-glycerol-3-phosphate (G3P) import. Binds G3P. The polypeptide is sn-glycerol-3-phosphate-binding periplasmic protein UgpB (ugpB) (Brucella abortus (strain 2308)).